Here is a 448-residue protein sequence, read N- to C-terminus: uncharacterized protein (448 aa).

In terms of tissue distribution, component of the acid-insoluble and acid-soluble organic matrix of the aragonitic skeleton (at protein level).

It localises to the secreted. This is an uncharacterized protein from Acropora millepora (Staghorn coral).